We begin with the raw amino-acid sequence, 266 residues long: Basic endochitinase C (266 aa).

A signal peptide spans 1-23; the sequence is MRSLAVVVAVVATVAMAIGTAHG. 3 cysteine pairs are disulfide-bonded: C46/C108, C120/C128, and C246/C259. E90 (proton donor) is an active-site residue.

The protein belongs to the glycosyl hydrolase 19 family. Chitinase class II subfamily. In terms of tissue distribution, localized to the starchy endoderm of the seed May localize to other parts of the seed including the aleurone cells (at protein level).

The enzyme catalyses Random endo-hydrolysis of N-acetyl-beta-D-glucosaminide (1-&gt;4)-beta-linkages in chitin and chitodextrins.. Its function is as follows. Defense against chitin-containing fungal pathogens. Binds the hyphal tips of fungi and degrades nascent chitin. This is Basic endochitinase C from Secale cereale (Rye).